A 270-amino-acid chain; its full sequence is NAD kinase (270 aa).

The active-site Proton acceptor is the D49. NAD(+)-binding positions include 49–50, R54, 126–127, R152, D154, 165–170, A189, and Q227; these read DG, NE, and TAYNKS.

This sequence belongs to the NAD kinase family. The cofactor is a divalent metal cation.

It is found in the cytoplasm. The enzyme catalyses NAD(+) + ATP = ADP + NADP(+) + H(+). Its function is as follows. Involved in the regulation of the intracellular balance of NAD and NADP, and is a key enzyme in the biosynthesis of NADP. Catalyzes specifically the phosphorylation on 2'-hydroxyl of the adenosine moiety of NAD to yield NADP. The protein is NAD kinase of Lactococcus lactis subsp. cremoris (strain SK11).